Reading from the N-terminus, the 142-residue chain is Galactose-binding lectin l-1 (142 aa).

The Galectin domain occupies 3–134 (FVEVKNLIMK…DATVKNISVN (132 aa)). 68–74 (WQEEQRD) is a binding site for a beta-D-galactoside. N-linked (GlcNAc...) asparagine glycosylation occurs at N130.

As to quaternary structure, homodimer. Post-translationally, the N-terminus is blocked. As to expression, skin; highest expression in that of individuals showing resistance to infectious disease.

It localises to the secreted. Its function is as follows. Involved in host defense at the body surface. Causes agglutination of the Gram-positive bacterium S.difficile. Possesses calcium-independent hemagglutinating activity. The chain is Galactose-binding lectin l-1 from Anguilla japonica (Japanese eel).